The chain runs to 155 residues: Small ribosomal subunit protein uS7 (155 aa).

The protein belongs to the universal ribosomal protein uS7 family. In terms of assembly, part of the 30S ribosomal subunit. Contacts proteins S9 and S11.

Functionally, one of the primary rRNA binding proteins, it binds directly to 16S rRNA where it nucleates assembly of the head domain of the 30S subunit. Is located at the subunit interface close to the decoding center, probably blocks exit of the E-site tRNA. The polypeptide is Small ribosomal subunit protein uS7 (Chloroherpeton thalassium (strain ATCC 35110 / GB-78)).